A 433-amino-acid polypeptide reads, in one-letter code: Glutamate-1-semialdehyde 2,1-aminomutase (433 aa).

Lysine 269 carries the post-translational modification N6-(pyridoxal phosphate)lysine.

This sequence belongs to the class-III pyridoxal-phosphate-dependent aminotransferase family. HemL subfamily. Homodimer. It depends on pyridoxal 5'-phosphate as a cofactor.

Its subcellular location is the cytoplasm. It catalyses the reaction (S)-4-amino-5-oxopentanoate = 5-aminolevulinate. It functions in the pathway porphyrin-containing compound metabolism; protoporphyrin-IX biosynthesis; 5-aminolevulinate from L-glutamyl-tRNA(Glu): step 2/2. The polypeptide is Glutamate-1-semialdehyde 2,1-aminomutase (Francisella philomiragia subsp. philomiragia (strain ATCC 25017 / CCUG 19701 / FSC 153 / O#319-036)).